A 237-amino-acid polypeptide reads, in one-letter code: Uridylate kinase (237 aa).

Position 12–15 (12–15 (KLSG)) interacts with ATP. Residues 20-25 (GEDGLG) form an involved in allosteric activation by GTP region. Residue glycine 54 participates in UMP binding. Residues glycine 55 and arginine 59 each coordinate ATP. Residues aspartate 74 and 135–142 (TGNPFFTT) each bind UMP. 3 residues coordinate ATP: threonine 162, tyrosine 168, and aspartate 171.

This sequence belongs to the UMP kinase family. As to quaternary structure, homohexamer.

The protein resides in the cytoplasm. It carries out the reaction UMP + ATP = UDP + ADP. It participates in pyrimidine metabolism; CTP biosynthesis via de novo pathway; UDP from UMP (UMPK route): step 1/1. Its activity is regulated as follows. Allosterically activated by GTP. Inhibited by UTP. In terms of biological role, catalyzes the reversible phosphorylation of UMP to UDP. The chain is Uridylate kinase from Haemophilus influenzae (strain PittGG).